Consider the following 85-residue polypeptide: Small ribosomal subunit protein bS18 (85 aa).

Belongs to the bacterial ribosomal protein bS18 family. Part of the 30S ribosomal subunit. Forms a tight heterodimer with protein bS6.

In terms of biological role, binds as a heterodimer with protein bS6 to the central domain of the 16S rRNA, where it helps stabilize the platform of the 30S subunit. The sequence is that of Small ribosomal subunit protein bS18 from Helicobacter pylori (strain Shi470).